The chain runs to 511 residues: Cytochrome P450 monooxygenase cypX (511 aa).

A helical transmembrane segment spans residues 18–38; sequence LPFSLALVAAAFVLYNIVSII. 2 N-linked (GlcNAc...) asparagine glycosylation sites follow: Asn162 and Asn407. Cys454 serves as a coordination point for heme.

Belongs to the cytochrome P450 family. The cofactor is heme.

Its subcellular location is the membrane. The protein operates within mycotoxin biosynthesis. Cytochrome P450 monooxygenase; part of the fragmented gene cluster that mediates the biosynthesis of dothistromin (DOTH), a polyketide toxin very similar in structure to the aflatoxin precursor, versicolorin B. The first step of the pathway is the conversion of acetate to norsolorinic acid (NOR) and requires the fatty acid synthase subunits hexA and hexB, as well as the polyketide synthase pksA. PksA combines a hexanoyl starter unit and 7 malonyl-CoA extender units to synthesize the precursor NOR. The hexanoyl starter unit is provided to the acyl-carrier protein (ACP) domain by the fungal fatty acid synthase hexA/hexB. The second step is the conversion of NOR to averantin (AVN) and requires the norsolorinic acid ketoreductase nor1, which catalyzes the dehydration of norsolorinic acid to form (1'S)-averantin. The cytochrome P450 monooxygenase avnA then catalyzes the hydroxylation of AVN to 5'hydroxyaverantin (HAVN). The next step is performed by adhA that transforms HAVN to averufin (AVF). Averufin might then be converted to hydroxyversicolorone by cypX and avfA. Hydroxyversicolorone is further converted versiconal hemiacetal acetate (VHA) by moxY. VHA is then the substrate for the versiconal hemiacetal acetate esterase est1 to yield versiconal (VAL). Versicolorin B synthase vbsA then converts VAL to versicolorin B (VERB) by closing the bisfuran ring. Then, the activity of the versicolorin B desaturase verB leads to versicolorin A (VERA). DotB, a predicted chloroperoxidase, may perform epoxidation of the A-ring of VERA. Alternatively, a cytochrome P450, such as cypX or avnA could catalyze this step. It is also possible that another, uncharacterized, cytochrome P450 enzyme is responsible for this step. Opening of the epoxide could potentially be achieved by the epoxide hydrolase epoA. However, epoA seems not to be required for DOTH biosynthesis, but other epoxide hydrolases may have the ability to complement this hydrolysis. Alternatively, opening of the epoxide ring could be achieved non-enzymatically. The next step is the deoxygenation of ring A to yield the 5,8-dihydroxyanthraquinone which is most likely catalyzed by the NADPH dehydrogenase encoded by ver1. The last stages of DOTH biosynthesis are proposed to involve hydroxylation of the bisfuran. OrdB and norB might have oxidative roles here. An alternative possibility is that cytochrome P450 monoogenases such as avnA and cypX might perform these steps in addition to previously proposed steps. In Dothistroma septosporum (Red band needle blight fungus), this protein is Cytochrome P450 monooxygenase cypX.